Consider the following 101-residue polypeptide: Small ribosomal subunit protein uS14 (101 aa).

Belongs to the universal ribosomal protein uS14 family. In terms of assembly, part of the 30S ribosomal subunit. Contacts proteins S3 and S10.

Binds 16S rRNA, required for the assembly of 30S particles and may also be responsible for determining the conformation of the 16S rRNA at the A site. This is Small ribosomal subunit protein uS14 from Escherichia coli O8 (strain IAI1).